The primary structure comprises 237 residues: uncharacterized protein (237 aa).

The N-acetyltransferase domain occupies 119 to 237; it reads VTVRRLTPTD…PAGLDGGLPA (119 aa).

This is an uncharacterized protein from Streptomyces virginiae (Streptomyces cinnamonensis).